Reading from the N-terminus, the 506-residue chain is Bifunctional purine biosynthesis protein PurH (506 aa).

The MGS-like domain occupies 1-146 (MARLALLSVS…KNFAHLTVLC (146 aa)).

The protein belongs to the PurH family.

It catalyses the reaction (6R)-10-formyltetrahydrofolate + 5-amino-1-(5-phospho-beta-D-ribosyl)imidazole-4-carboxamide = 5-formamido-1-(5-phospho-D-ribosyl)imidazole-4-carboxamide + (6S)-5,6,7,8-tetrahydrofolate. The enzyme catalyses IMP + H2O = 5-formamido-1-(5-phospho-D-ribosyl)imidazole-4-carboxamide. It participates in purine metabolism; IMP biosynthesis via de novo pathway; 5-formamido-1-(5-phospho-D-ribosyl)imidazole-4-carboxamide from 5-amino-1-(5-phospho-D-ribosyl)imidazole-4-carboxamide (10-formyl THF route): step 1/1. The protein operates within purine metabolism; IMP biosynthesis via de novo pathway; IMP from 5-formamido-1-(5-phospho-D-ribosyl)imidazole-4-carboxamide: step 1/1. This is Bifunctional purine biosynthesis protein PurH from Trichormus variabilis (strain ATCC 29413 / PCC 7937) (Anabaena variabilis).